A 430-amino-acid polypeptide reads, in one-letter code: MGKDKKDRKHKGGLTEDILEKNVTKPSKRVKHRRERQADSVESFVEEKLSKKILEQARQQQDELMEEYGFRKTGDRKTLKSAQTTLGTPDLDRIDDDDEDDSDDGASMTSETYYENVEVDEEEEKAFEMFMSQEAPTRRTLADVIMEKIQDKKTEIESHMSEQSTAPQMDERLVKVFKGVGEILKKYRSGKLPKAFKFIPSLTNWEEVLFITEPDEWSAAALFQATKIFVSNLNAKMAQRFFNLVLLPRIQDDIAEYKRLNYHLYMALKKALFKPAAFFKGILLPMCESGNCSLREAIIISSVLAKTTIPVLHSSAVILKIAEMNYSGANSIFLRTLFDKKYALPYRVIDAAVYHFLRFLTDKRTLPVLWHQCLLTFVQRYKEDISSEQKEALMELCRVHVHDKITPEVRRELVHSKSRDMETDQPMEST.

2 stretches are compositionally biased toward basic residues: residues 1 to 12 (MGKDKKDRKHKG) and 26 to 35 (PSKRVKHRRE). Disordered regions lie at residues 1–45 (MGKD…ESFV) and 65–113 (MEEY…SETY). A compositionally biased stretch (basic and acidic residues) spans 68–78 (YGFRKTGDRKT). The span at 93–104 (RIDDDDEDDSDD) shows a compositional bias: acidic residues.

The protein belongs to the bystin family.

It is found in the nucleus. The protein localises to the nucleolus. In terms of biological role, required for processing of 20S pre-rRNA precursor and biogenesis of 40S ribosomal subunits. The polypeptide is Bystin (bysl) (Nematostella vectensis (Starlet sea anemone)).